Consider the following 123-residue polypeptide: Defensin beta 118 (123 aa).

An N-terminal signal peptide occupies residues 1–19 (MKLLLLALPILVLLPQVIP). 3 disulfides stabilise this stretch: Cys27–Cys54, Cys34–Cys48, and Cys38–Cys55. Residues 65 to 123 (LPTTSPTPLSDSTPGIIDNILTIRFTTDYFEISSKKDMVEESEAGQGTQTSPPNVHHTS) constitute a propeptide that is removed on maturation. The interval 100-123 (KDMVEESEAGQGTQTSPPNVHHTS) is disordered. Positions 109–123 (GQGTQTSPPNVHHTS) are enriched in polar residues.

This sequence belongs to the beta-defensin family. Post-translationally, the three-dimensional structure formed by the three intramolecular disulfide bridges is indispensable for antimicrobial activity. In terms of tissue distribution, high-level and epididymis-specific expression. Most abundant in the epithelium of the caput and is also present in the lumen and bound to sperm.

The protein localises to the secreted. In terms of biological role, host defense peptide that exhibits antimicrobial activity against both Gram-negative bacteria, such as E.coli and S.typhimurium, and Gram-positive bacteria, such as S.aureus and B.subtilis. Inhibits cell adhesion of E.coli on intestinal epithelial enterocytes. Causes rapid permeabilization of both the outer and inner membrane of E.coli, leading to morphological alterations on the bacterial surface. Binds to bacterial lipopolysaccharides (LPS) with high affinity, and may thereby be involved in immunoregulation through LPS neutralization. May contribute to epididymal innate immunity and protect the sperm against attack by microorganisms. The protein is Defensin beta 118 (DEFB118) of Macaca mulatta (Rhesus macaque).